We begin with the raw amino-acid sequence, 504 residues long: Immunoglobulin-binding protein EibC (504 aa).

Residues 1–26 (MSKKFTMTLLSSSLAGLLVMSGGVSA) form the signal peptide. The interval 27 to 413 (QEEKYTVPYA…IAANTRTLQQ (387 aa)) is surface exposed passenger domain. The Extracellular portion of the chain corresponds to 27–453 (QEEKYTVPYA…GLFQPYSVGK (427 aa)). The interval 154-280 (DAKASGEFSV…TGTESDKTYG (127 aa)) is head domain. A neck region spans residues 281–296 (TRVLGGLSDGTRNSDA). The interval 297–342 (ATVGQLNRKVGGVYDDVKARITVESEKQKKYTDQKTSEVNEKVEAR) is right-handed coiled-coil (RHcc). The interval 343 to 368 (TTVGVDSDGKLTRAEGATKTIAVNDG) is saddle domain. The tract at residues 369-434 (LVALSGRTDR…INENHKEMKR (66 aa)) is left-handed coiled-coil (LHcc). Positions 411–438 (LQQHSARLDSQQRQINENHKEMKRAAAQ) form a coiled coil. An outer membrane translocation of the passenger domain region spans residues 411–453 (LQQHSARLDSQQRQINENHKEMKRAAAQSAALTGLFQPYSVGK). The next 4 membrane-spanning stretches (beta stranded) occupy residues 454-464 (FNATAAVGGYS), 467-478 (QALAVGVGYRFN), 481-490 (TAAKAGVAFS), and 494-504 (ASWNVGVNFEF). A translocator domain region spans residues 454–504 (FNATAAVGGYSDQQALAVGVGYRFNEQTAAKAGVAFSDGDASWNVGVNFEF).

This sequence belongs to the autotransporter-2 (AT-2) (TC 1.B.40) family. Eib subfamily. In terms of assembly, homotrimer; can probably form mixed heterotrimers in vivo. Will form mixed heterotrimers with EibD; these are correctly located in the outer membrane and bind IgG Fc, although less well than homotrimers. In denaturing gels runs as a band of about 200 kDa. Binds the Fc portion of immunoglobulins; binds more than 1 Fc per subunit.

The protein localises to the cell surface. The protein resides in the cell outer membrane. Its function is as follows. Binds (in a non-immune fashion) to the Fc portion of human IgG and less well to IgA; binding occurs on the cell surface. Confers the ability to survive exposure to human serum exposure. Binds to the Fc portion of human IgG and IgA and to whole mouse antibodies also via Fc. This is Immunoglobulin-binding protein EibC from Escherichia coli.